Here is a 178-residue protein sequence, read N- to C-terminus: Caveolin-1 (178 aa).

Serine 2 bears the N-acetylserine mark. Serine 2 is subject to Phosphoserine. The interval serine 2–valine 94 is required for homooligomerization. At serine 2–serine 104 the chain is on the cytoplasmic side. At lysine 5 the chain carries N6-acetyllysine; alternate. A Glycyl lysine isopeptide (Lys-Gly) (interchain with G-Cter in ubiquitin); alternate cross-link involves residue lysine 5. At tyrosine 6 the chain carries Phosphotyrosine. Residue serine 9 is modified to Phosphoserine. The residue at position 14 (tyrosine 14) is a Phosphotyrosine; by ABL1. Position 25 is a phosphotyrosine (tyrosine 25). Residues lysine 26, lysine 30, lysine 39, lysine 47, and lysine 57 each participate in a glycyl lysine isopeptide (Lys-Gly) (interchain with G-Cter in ubiquitin) cross-link. The tract at residues aspartate 82–valine 94 is interaction with CAVIN3. An intramembrane region (helical) is located at residues alanine 105 to leucine 125. Topologically, residues histidine 126–isoleucine 178 are cytoplasmic. The segment at valine 131–glutamine 142 is interacts with SPRY1, SPRY2, SPRY3 and SPRY4. Residues cysteine 133, cysteine 143, and cysteine 156 are each lipidated (S-palmitoyl cysteine). The interval serine 149–phenylalanine 160 is interacts with SPRY1, SPRY2, and SPRY4. The interval phenylalanine 167–isoleucine 178 is interacts with SPRY1, SPRY2, SPRY3 and SPRY4.

Belongs to the caveolin family. Homooligomer. Interacts with GLIPR2. Interacts with NOSTRIN. Interacts with SNAP25 and STX1A. Interacts (via the N-terminus) with DPP4; the interaction is direct. Interacts with CTNNB1, CDH1 and JUP. Interacts with PACSIN2; this interaction induces membrane tubulation. Interacts with SLC7A9. Interacts with BMX and BTK. Interacts with TGFBR1. Interacts with CAVIN3 (via leucine-zipper domain) in a cholesterol-sensitive manner. Interacts with CAVIN1. Interacts with EHD2 in a cholesterol-dependent manner. Forms a ternary complex with UBXN6 and VCP; mediates CAV1 targeting to lysosomes for degradation. Interacts with ABCG1; this interaction regulates ABCG1-mediated cholesterol efflux. Interacts with NEU3; this interaction enhances NEU3 sialidase activity within caveola. Interacts (via C-terminus) with SPRY1, SPRY2 (via C-terminus), SPRY3, and SPRY4. Interacts with IGFBP5; this interaction allows trafficking of IGFBP5 from the plasma membrane to the nucleus. In terms of processing, phosphorylated at Tyr-14 by ABL1 in response to oxidative stress. Ubiquitinated. Undergo monoubiquitination and multi- and/or polyubiquitination. Monoubiquitination of N-terminal lysines promotes integration in a ternary complex with UBXN6 and VCP which promotes oligomeric CAV1 targeting to lysosomes for degradation. Ubiquitinated by ZNRF1; leading to degradation and modulation of the TLR4-mediated immune response.

Its subcellular location is the golgi apparatus membrane. It is found in the cell membrane. The protein resides in the membrane. It localises to the caveola. The protein localises to the membrane raft. In terms of biological role, may act as a scaffolding protein within caveolar membranes. Forms a stable heterooligomeric complex with CAV2 that targets to lipid rafts and drives caveolae formation. Mediates the recruitment of CAVIN proteins (CAVIN1/2/3/4) to the caveolae. Interacts directly with G-protein alpha subunits and can functionally regulate their activity. Involved in the costimulatory signal essential for T-cell receptor (TCR)-mediated T-cell activation. Its binding to DPP4 induces T-cell proliferation and NF-kappa-B activation in a T-cell receptor/CD3-dependent manner. Recruits CTNNB1 to caveolar membranes and may regulate CTNNB1-mediated signaling through the Wnt pathway. Negatively regulates TGFB1-mediated activation of SMAD2/3 by mediating the internalization of TGFBR1 from membrane rafts leading to its subsequent degradation. Binds 20(S)-hydroxycholesterol (20(S)-OHC). This Equus caballus (Horse) protein is Caveolin-1 (CAV1).